A 414-amino-acid chain; its full sequence is Protein HIM1 (414 aa).

Functionally, may participate in the control of processing of mutational intermediates appearing during error-prone bypass of DNA damage. In Saccharomyces cerevisiae (strain ATCC 204508 / S288c) (Baker's yeast), this protein is Protein HIM1 (HIM1).